Reading from the N-terminus, the 510-residue chain is Polyamine aminopropyltransferase 2 (510 aa).

Helical transmembrane passes span 6-26, 38-58, 74-94, 102-122, 140-160, and 165-185; these read ALLV…ELIA, ILQF…GSWV, LELL…LLFA, LVLY…IPLV, VLTF…LVLA, and LVRT…WTLW. The region spanning 205–449 is the PABS domain; sequence AGMVGAALLA…GEWGFILAAP (245 aa). The interval 207–456 is spermidine synthase; the sequence is MVGAALLAGF…AAPGRADFRP (250 aa). Gln-244 contacts S-methyl-5'-thioadenosine. Spermidine is bound by residues His-274 and Asp-298. Residues Asp-318 and 352-353 each bind S-methyl-5'-thioadenosine; that span reads DA. Asp-370 functions as the Proton acceptor in the catalytic mechanism.

It belongs to the spermidine/spermine synthase family. Homodimer or homotetramer.

It is found in the cell membrane. The catalysed reaction is S-adenosyl 3-(methylsulfanyl)propylamine + putrescine = S-methyl-5'-thioadenosine + spermidine + H(+). The protein operates within amine and polyamine biosynthesis; spermidine biosynthesis; spermidine from putrescine: step 1/1. Its function is as follows. Catalyzes the irreversible transfer of a propylamine group from the amino donor S-adenosylmethioninamine (decarboxy-AdoMet) to putrescine (1,4-diaminobutane) to yield spermidine. This Ralstonia nicotianae (strain ATCC BAA-1114 / GMI1000) (Ralstonia solanacearum) protein is Polyamine aminopropyltransferase 2.